The primary structure comprises 209 residues: Thymidylate kinase (209 aa).

7–14 (GVEGSGKS) is an ATP binding site.

It belongs to the thymidylate kinase family.

It catalyses the reaction dTMP + ATP = dTDP + ADP. Phosphorylation of dTMP to form dTDP in both de novo and salvage pathways of dTTP synthesis. In Solidesulfovibrio magneticus (strain ATCC 700980 / DSM 13731 / RS-1) (Desulfovibrio magneticus), this protein is Thymidylate kinase.